A 261-amino-acid chain; its full sequence is DNA repair protein RecO (261 aa).

It belongs to the RecO family.

Its function is as follows. Involved in DNA repair and RecF pathway recombination. In Chlorobium limicola (strain DSM 245 / NBRC 103803 / 6330), this protein is DNA repair protein RecO.